The chain runs to 573 residues: Poly(ribitol-phosphate) beta-N-acetylglucosaminyltransferase TarS (573 aa).

Residues P9, D41, N68, R76, D92 to D94, R127, and E178 each bind UDP-N-acetyl-alpha-D-glucosamine. Residue D94 coordinates Mn(2+). D179 serves as the catalytic Proton acceptor. UDP-N-acetyl-alpha-D-glucosamine contacts are provided by residues R207 and H211–S213.

It belongs to the glycosyltransferase 2 family. As to quaternary structure, homotrimer. Mn(2+) serves as cofactor.

It catalyses the reaction 4-O-[(D-ribitylphospho)(n)-di{(2R)-glycerylphospho}]-N-acetyl-beta-D-mannosaminyl-(1-&gt;4)-N-acetyl-alpha-D-glucosaminyl di-trans,octa-cis-undecaprenyl diphosphate + n UDP-N-acetyl-alpha-D-glucosamine = 4-O-([2-N-acetyl-beta-D-glucosaminyl-1-D-ribitylphospho](n)-di{[2R]-1-glycerylphospho})-N-acetyl-beta-D-mannosaminyl-(1-&gt;4)-N-acetyl-alpha-D-glucosaminyl di-trans,octa-cis-undecaprenyl diphosphate + n UDP + n H(+). It participates in cell wall biogenesis; poly(ribitol phosphate) teichoic acid biosynthesis. Its function is as follows. Attaches beta-O-GlcNAc (beta-O-N-acetyl-D-glucosamine) residues to the C4 position of poly(RboP)-wall teichoic acids (WTAs). Prefers UDP-GlcNAc as a donor substrate and is specific for poly(ribitol phosphate) WTAs. Can also use UDP-Glc and UDP-GalNAc, but not UDP-galactose or UDP-glucuronic acid. Mediates beta-lactam resistance in methicillin resistant Staphylococcus aureus (MRSA) strains. This is Poly(ribitol-phosphate) beta-N-acetylglucosaminyltransferase TarS from Staphylococcus aureus (strain MW2).